We begin with the raw amino-acid sequence, 168 residues long: Crossover junction endodeoxyribonuclease RuvC (168 aa).

Catalysis depends on residues aspartate 9, glutamate 70, and aspartate 145. The Mg(2+) site is built by aspartate 9, glutamate 70, and aspartate 145.

The protein belongs to the RuvC family. In terms of assembly, homodimer which binds Holliday junction (HJ) DNA. The HJ becomes 2-fold symmetrical on binding to RuvC with unstacked arms; it has a different conformation from HJ DNA in complex with RuvA. In the full resolvosome a probable DNA-RuvA(4)-RuvB(12)-RuvC(2) complex forms which resolves the HJ. Mg(2+) serves as cofactor.

It is found in the cytoplasm. It catalyses the reaction Endonucleolytic cleavage at a junction such as a reciprocal single-stranded crossover between two homologous DNA duplexes (Holliday junction).. Its function is as follows. The RuvA-RuvB-RuvC complex processes Holliday junction (HJ) DNA during genetic recombination and DNA repair. Endonuclease that resolves HJ intermediates. Cleaves cruciform DNA by making single-stranded nicks across the HJ at symmetrical positions within the homologous arms, yielding a 5'-phosphate and a 3'-hydroxyl group; requires a central core of homology in the junction. The consensus cleavage sequence is 5'-(A/T)TT(C/G)-3'. Cleavage occurs on the 3'-side of the TT dinucleotide at the point of strand exchange. HJ branch migration catalyzed by RuvA-RuvB allows RuvC to scan DNA until it finds its consensus sequence, where it cleaves and resolves the cruciform DNA. In Chlamydia pneumoniae (Chlamydophila pneumoniae), this protein is Crossover junction endodeoxyribonuclease RuvC.